An 88-amino-acid chain; its full sequence is Small ribosomal subunit protein uS12 (88 aa).

Residues 1–24 (RKGRRDKIGKVKTAALKGSPQRRG) are disordered. At aspartate 81 the chain carries 3-methylthioaspartic acid.

This sequence belongs to the universal ribosomal protein uS12 family. Part of the 30S ribosomal subunit. Contacts proteins S8 and S17. May interact with IF1 in the 30S initiation complex.

Functionally, with S4 and S5 plays an important role in translational accuracy. Interacts with and stabilizes bases of the 16S rRNA that are involved in tRNA selection in the A site and with the mRNA backbone. Located at the interface of the 30S and 50S subunits, it traverses the body of the 30S subunit contacting proteins on the other side and probably holding the rRNA structure together. The combined cluster of proteins S8, S12 and S17 appears to hold together the shoulder and platform of the 30S subunit. The chain is Small ribosomal subunit protein uS12 (rpsL) from Mycobacterium szulgai.